The primary structure comprises 363 residues: Flagellar P-ring protein (363 aa).

A signal peptide spans 1-20 (MKKFTLLLLCFVLPMTSAYA).

The protein belongs to the FlgI family. In terms of assembly, the basal body constitutes a major portion of the flagellar organelle and consists of four rings (L,P,S, and M) mounted on a central rod.

Its subcellular location is the periplasm. It localises to the bacterial flagellum basal body. Assembles around the rod to form the L-ring and probably protects the motor/basal body from shearing forces during rotation. This is Flagellar P-ring protein from Vibrio vulnificus (strain YJ016).